Reading from the N-terminus, the 90-residue chain is Probable Fe(2+)-trafficking protein (90 aa).

The protein belongs to the Fe(2+)-trafficking protein family. Monomer.

Could be a mediator in iron transactions between iron acquisition and iron-requiring processes, such as synthesis and/or repair of Fe-S clusters in biosynthetic enzymes. This is Probable Fe(2+)-trafficking protein from Serratia proteamaculans (strain 568).